A 201-amino-acid polypeptide reads, in one-letter code: Ribonuclease HII (201 aa).

The RNase H type-2 domain maps to 12 to 201 (GIVCGIDEVG…FAPVAQYMLF (190 aa)). Positions 18, 19, and 113 each coordinate a divalent metal cation.

This sequence belongs to the RNase HII family. Mn(2+) serves as cofactor. The cofactor is Mg(2+).

The protein resides in the cytoplasm. It carries out the reaction Endonucleolytic cleavage to 5'-phosphomonoester.. Functionally, endonuclease that specifically degrades the RNA of RNA-DNA hybrids. The sequence is that of Ribonuclease HII (rnhB) from Paramagnetospirillum magneticum (strain ATCC 700264 / AMB-1) (Magnetospirillum magneticum).